Consider the following 37-residue polypeptide: Large ribosomal subunit protein bL36 (37 aa).

It belongs to the bacterial ribosomal protein bL36 family.

This is Large ribosomal subunit protein bL36 from Natranaerobius thermophilus (strain ATCC BAA-1301 / DSM 18059 / JW/NM-WN-LF).